We begin with the raw amino-acid sequence, 332 residues long: Ribosomal RNA small subunit methyltransferase H (332 aa).

S-adenosyl-L-methionine is bound by residues 36–38, Asp-54, Phe-81, Asp-102, and Gln-109; that span reads GGY. Positions 295 to 322 are disordered; the sequence is PRARSAKLRGAERTESPAHAAGDLPGWP.

This sequence belongs to the methyltransferase superfamily. RsmH family.

It is found in the cytoplasm. It carries out the reaction cytidine(1402) in 16S rRNA + S-adenosyl-L-methionine = N(4)-methylcytidine(1402) in 16S rRNA + S-adenosyl-L-homocysteine + H(+). Its function is as follows. Specifically methylates the N4 position of cytidine in position 1402 (C1402) of 16S rRNA. This Rhodopseudomonas palustris (strain ATCC BAA-98 / CGA009) protein is Ribosomal RNA small subunit methyltransferase H.